Consider the following 507-residue polypeptide: Cytochrome P450 monooxygenase cloA (507 aa).

Residues 15–35 (WTWILLTTCIALISPLVLKGI) form a helical membrane-spanning segment. Asn-247 carries N-linked (GlcNAc...) asparagine glycosylation. Residue Cys-450 participates in heme binding.

This sequence belongs to the cytochrome P450 family. Requires heme as cofactor.

The protein resides in the membrane. The protein operates within alkaloid biosynthesis; ergot alkaloid biosynthesis. Cytochrome P450 monooxygenase; part of the gene cluster that mediates the biosynthesis of fungal ergot alkaloid. DmaW catalyzes the first step of ergot alkaloid biosynthesis by condensing dimethylallyl diphosphate (DMAP) and tryptophan to form 4-dimethylallyl-L-tryptophan. The second step is catalyzed by the methyltransferase easF that methylates 4-dimethylallyl-L-tryptophan in the presence of S-adenosyl-L-methionine, resulting in the formation of 4-dimethylallyl-L-abrine. The catalase easC and the FAD-dependent oxidoreductase easE then transform 4-dimethylallyl-L-abrine to chanoclavine-I which is further oxidized by easD in the presence of NAD(+), resulting in the formation of chanoclavine-I aldehyde. Agroclavine dehydrogenase easG then mediates the conversion of chanoclavine-I aldehyde to agroclavine via a non-enzymatic adduct reaction: the substrate is an iminium intermediate that is formed spontaneously from chanoclavine-I aldehyde in the presence of glutathione. The presence of easA is not required to complete this reaction. Further conversion of agroclavine to paspalic acid is a two-step process involving oxidation of agroclavine to elymoclavine and of elymoclavine to paspalic acid, the second step being performed by the elymoclavine oxidase cloA. Paspalic acid is then further converted to D-lysergic acid. Ergopeptines are assembled from D-lysergic acid and three different amino acids by the D-lysergyl-peptide-synthetases composed each of a monomudular and a trimodular nonribosomal peptide synthetase subunit. LpsB and lpsC encode the monomodular subunits responsible for D-lysergic acid activation and incorporation into the ergopeptine backbone. LpsA1 and A2 subunits encode the trimodular nonribosomal peptide synthetase assembling the tripeptide portion of ergopeptines. LpsA1 is responsible for formation of the major ergopeptine, ergotamine, and lpsA2 for alpha-ergocryptine, the minor ergopeptine of the total alkaloid mixture elaborated by C.purpurea. D-lysergyl-tripeptides are assembled by the nonribosomal peptide synthetases and released as N-(D-lysergyl-aminoacyl)-lactams. Cyclolization of the D-lysergyl-tripeptides is performed by the Fe(2+)/2-ketoglutarate-dependent dioxygenase easH which introduces a hydroxyl group into N-(D-lysergyl-aminoacyl)-lactam at alpha-C of the aminoacyl residue followed by spontaneous condensation with the terminal lactam carbonyl group. The sequence is that of Cytochrome P450 monooxygenase cloA from Claviceps purpurea (strain 20.1) (Ergot fungus).